The following is an 881-amino-acid chain: Alanine--tRNA ligase (881 aa).

Zn(2+) is bound by residues His-563, His-567, Cys-672, and His-676.

This sequence belongs to the class-II aminoacyl-tRNA synthetase family. It depends on Zn(2+) as a cofactor.

Its subcellular location is the cytoplasm. It catalyses the reaction tRNA(Ala) + L-alanine + ATP = L-alanyl-tRNA(Ala) + AMP + diphosphate. Catalyzes the attachment of alanine to tRNA(Ala) in a two-step reaction: alanine is first activated by ATP to form Ala-AMP and then transferred to the acceptor end of tRNA(Ala). Also edits incorrectly charged Ser-tRNA(Ala) and Gly-tRNA(Ala) via its editing domain. The polypeptide is Alanine--tRNA ligase (Azorhizobium caulinodans (strain ATCC 43989 / DSM 5975 / JCM 20966 / LMG 6465 / NBRC 14845 / NCIMB 13405 / ORS 571)).